The following is a 256-amino-acid chain: Thiazole synthase (256 aa).

Lys95 (schiff-base intermediate with DXP) is an active-site residue. 1-deoxy-D-xylulose 5-phosphate-binding positions include Gly156, 182 to 183 (AG), and 204 to 205 (NT).

It belongs to the ThiG family. As to quaternary structure, homotetramer. Forms heterodimers with either ThiH or ThiS.

The protein resides in the cytoplasm. It catalyses the reaction [ThiS sulfur-carrier protein]-C-terminal-Gly-aminoethanethioate + 2-iminoacetate + 1-deoxy-D-xylulose 5-phosphate = [ThiS sulfur-carrier protein]-C-terminal Gly-Gly + 2-[(2R,5Z)-2-carboxy-4-methylthiazol-5(2H)-ylidene]ethyl phosphate + 2 H2O + H(+). It functions in the pathway cofactor biosynthesis; thiamine diphosphate biosynthesis. In terms of biological role, catalyzes the rearrangement of 1-deoxy-D-xylulose 5-phosphate (DXP) to produce the thiazole phosphate moiety of thiamine. Sulfur is provided by the thiocarboxylate moiety of the carrier protein ThiS. In vitro, sulfur can be provided by H(2)S. This is Thiazole synthase from Shigella boydii serotype 18 (strain CDC 3083-94 / BS512).